The sequence spans 122 residues: T cell receptor gamma variable 9 (122 aa).

A signal peptide spans 1–20; it reads MLSLLHTSTLAVLGALCVYG. In terms of domain architecture, Ig-like spans 27-122; sequence PQISSTKTLS…ATYYCALWEV (96 aa). A disulfide bridge connects residues Cys43 and Cys117.

In terms of assembly, gamma-delta TR is a heterodimer composed of a gamma and delta chain; disulfide-linked. The gamma-delta TR is associated with the transmembrane signaling CD3 coreceptor proteins following the stoichiometry: a single gamma-delta TR heterodimer associates with one CD3D-CD3E heterodimer, one CD3G-CD3E heterodimer and one CD247 homodimer forming a stable octameric structure. Upon activation, gamma-delta TR complex associates with FCER1G to initiate intracellular signaling.

It is found in the cell membrane. Its function is as follows. V region of the variable domain of T cell receptor (TR) gamma chain that participates in the antigen recognition. Gamma-delta TRs recognize a variety of self and foreign non-peptide antigens frequently expressed at the epithelial boundaries between the host and external environment, including endogenous lipids presented by MH-like protein CD1D and phosphoantigens presented by butyrophilin-like molecule BTN3A1. Upon antigen recognition induces rapid, innate-like immune responses involved in pathogen clearance and tissue repair. Binding of gamma-delta TR complex to antigen triggers phosphorylation of immunoreceptor tyrosine-based activation motifs (ITAMs) in the CD3 chains by the LCK and FYN kinases, allowing the recruitment, phosphorylation, and activation of ZAP70 that facilitates phosphorylation of the scaffolding proteins LCP2 and LAT. This lead to the formation of a supramolecular signalosome that recruits the phospholipase PLCG1, resulting in calcium mobilization and ERK activation, ultimately leading to T cell expansion and differentiation into effector cells. Gamma-delta TRs are produced through somatic rearrangement of a limited repertoire of variable (V), diversity (D), and joining (J) genes. The potential diversity of gamma-delta TRs is conferred by the unique ability to rearrange (D) genes in tandem and to utilize all three reading frames. The combinatorial diversity is considerably increased by the sequence exonuclease trimming and random nucleotide (N) region additions which occur during the V-(D)-J rearrangements. The sequence is that of T cell receptor gamma variable 9 from Homo sapiens (Human).